Consider the following 341-residue polypeptide: Acetylpolyamine amidohydrolase (341 aa).

The active-site Proton donor/acceptor is histidine 157. The Zn(2+) site is built by aspartate 192, histidine 194, and aspartate 281.

This sequence belongs to the histone deacetylase family. In terms of assembly, homodimer. Zn(2+) is required as a cofactor.

It carries out the reaction N-acetylputrescine + H2O = putrescine + acetate. The catalysed reaction is N-acetylcadaverine + H2O = cadaverine + acetate. Its pathway is amine and polyamine metabolism. In terms of biological role, involved in polyamine metabolism. Catalyzes the deacetylation of various acetylated polyamines such as N-acetylputrescine and N-acetylcadaverine. In Burkholderia pseudomallei (strain 1710b), this protein is Acetylpolyamine amidohydrolase.